A 391-amino-acid chain; its full sequence is Flagellin (391 aa).

It belongs to the bacterial flagellin family.

Its subcellular location is the secreted. It localises to the bacterial flagellum. Its function is as follows. Flagellin is the subunit protein which polymerizes to form the filaments of bacterial flagella. This Bordetella bronchiseptica (strain ATCC BAA-588 / NCTC 13252 / RB50) (Alcaligenes bronchisepticus) protein is Flagellin (flaA).